We begin with the raw amino-acid sequence, 638 residues long: NBPF family member NBPF4 (638 aa).

Coiled coils occupy residues 10 to 43 (SERA…EKFL) and 69 to 115 (DSVL…KLRE). The disordered stretch occupies residues 157–285 (HLVHKLSPEN…VPPRHHDKSN (129 aa)). A compositionally biased stretch (acidic residues) spans 165 to 179 (ENDEDEDEDEDDKDE). The Olduvai 1 domain occupies 174–261 (EDDKDEEVEK…EEEEALNIPP (88 aa)). Basic and acidic residues predominate over residues 192–202 (EVQKTEEKEVP). Residues 214 to 226 (SNSHNPSNSNQPH) are compositionally biased toward low complexity. Basic and acidic residues-rich tracts occupy residues 232 to 251 (TFKE…HPHD) and 264 to 273 (QNDHEEEEGK). 2 Olduvai domains span residues 326–399 (EKQS…ALVD) and 400–503 (KIKK…SQAQ). Positions 562-584 (GMKNPPQLEDDALEGSASNTQGR) are disordered.

It belongs to the NBPF family. As to expression, expressed in testis.

It is found in the cytoplasm. This is NBPF family member NBPF4 from Homo sapiens (Human).